The chain runs to 591 residues: L-fucose isomerase (591 aa).

Active-site proton acceptor residues include glutamate 337 and aspartate 361. Glutamate 337, aspartate 361, and histidine 528 together coordinate Mn(2+).

The protein belongs to the L-fucose isomerase family. As to quaternary structure, homohexamer. Requires Mn(2+) as cofactor.

It is found in the cytoplasm. It carries out the reaction L-fucose = L-fuculose. The protein operates within carbohydrate degradation; L-fucose degradation; L-lactaldehyde and glycerone phosphate from L-fucose: step 1/3. Converts the aldose L-fucose into the corresponding ketose L-fuculose. This Salmonella choleraesuis (strain SC-B67) protein is L-fucose isomerase.